We begin with the raw amino-acid sequence, 354 residues long: MRFRCYLIFSIFSDSLLGAGFFQGGKRAMVVSTPIAAEEKPPIQANVVETWEISKIYRTGFWMNQKVESLKPLSIAVQQGETFGLLGPNGAGKTTLLKILLGVIRASGGRGTLLGKPIGDRQTKQRVGYLPENAYFYDFLTAWEFLDYIGSLFQIGKQERQRRILAMCDLVGLAQKTAKKKQLRQYSKGMLQRVGMAQALINDPEVVFLDEPMSGLDPLGRYQVREIILSLKEQGKTIFFNSHILADVEQICDRIAILARGELLCSGSLAEVLGNDEGYEVVLKGGEEEALGKYLANLSQEQDVWHGHYQGDVQALVDALPSLNARLISMNLARPSLEDYFIRQLRERGITTSQ.

Positions V48–G285 constitute an ABC transporter domain. An ATP-binding site is contributed by G87–T94.

It belongs to the ABC transporter superfamily.

This is an uncharacterized protein from Synechocystis sp. (strain ATCC 27184 / PCC 6803 / Kazusa).